We begin with the raw amino-acid sequence, 378 residues long: Nucleosome assembly protein 1;1 (378 aa).

A coiled-coil region spans residues 33–87 (VNALKDKLQSLAGQHTDVLEALSPNVRKRVEYLREIQGQHDEIELKFFEERAALE). Residues 54–69 (LSPNVRKRVEYLREIQ) carry the Nuclear export signal motif. A Nuclear localization signal motif is present at residues 230-235 (KKKPKK). The disordered stretch occupies residues 306–378 (AVQAEDFDDM…ADQPADCKQQ (73 aa)). Over residues 308 to 344 (QAEDFDDMEDDEEDDEDDDEDEEEEEEDEDEDEDDEE) the composition is skewed to acidic residues. The Nuclear localization signal signature appears at 348 to 352 (KPKKK). Residues 356–378 (KPKLPSKGGAQGGADQPADCKQQ) show a composition bias toward low complexity. Cysteine methyl ester is present on Cys-375. A lipid anchor (S-farnesyl cysteine) is attached at Cys-375. A propeptide spans 376 to 378 (KQQ) (removed in mature form).

This sequence belongs to the nucleosome assembly protein (NAP) family.

Its subcellular location is the nucleus. The protein localises to the cytoplasm. In terms of biological role, may modulate chromatin structure by regulation of nucleosome assembly/disassembly. The polypeptide is Nucleosome assembly protein 1;1 (NAP1;1) (Oryza sativa subsp. japonica (Rice)).